Consider the following 1703-residue polypeptide: Protein TIC 214 (1703 aa).

The next 6 helical transmembrane spans lie at 39 to 61, 67 to 87, 90 to 110, 138 to 158, 174 to 194, and 220 to 240; these read YYGFLTALPIGPSQILSIRTFFL, GIICILGSMMGQFVILLSIYC, LYVMLVKPHLMTLLVIPYMFY, LLLDSFIFQLLNPILLPNPVL, FFLTSSLLGWLCGHILFINSI, and FSILISITFFLYLGRSPVPLI. 2 disordered regions span residues 615–643 and 1431–1494; these read GPRKGKLEDKEKEKEKAAQTQTEVKKERE and TKEP…WKSK. A coiled-coil region spans residues 618–660; sequence KGKLEDKEKEKEKAAQTQTEVKKEREKEKEERVIKRFQNQSDF. Positions 619-643 are enriched in basic and acidic residues; that stretch reads GKLEDKEKEKEKAAQTQTEVKKERE.

Belongs to the TIC214 family. In terms of assembly, part of the Tic complex.

It is found in the plastid. Its subcellular location is the chloroplast inner membrane. Its function is as follows. Involved in protein precursor import into chloroplasts. May be part of an intermediate translocation complex acting as a protein-conducting channel at the inner envelope. In Psilotum nudum (Whisk fern), this protein is Protein TIC 214.